The following is a 397-amino-acid chain: Odorant receptor 2a (397 aa).

Topologically, residues 1–38 (MEKQEDFKLNTHSAVYYHWRVWELTGLMRPPGVSSLLY) are cytoplasmic. A helical transmembrane segment spans residues 39–59 (VVYSITVNLVVTVLFPLSLLA). At 60-72 (RLLFTTNMAGLCE) the chain is on the extracellular side. Residues 73 to 92 (NLTITITDIVANLKFANVYM) traverse the membrane as a helical segment. Over 93–131 (VRKQLHEIRSLLRLMDARARLVGDPEEISALRKEVNIAQ) the chain is Cytoplasmic. The helical transmembrane segment at 132 to 150 (GTFRTFASIFVFGTTLSCV) threads the bilayer. Residues 151-176 (RVVVRPDRELLYPAWFGVDWMHSTRN) lie on the Extracellular side of the membrane. Residues 177–197 (YVLINIYQLFGLIVQAIQNCA) traverse the membrane as a helical segment. Topologically, residues 198 to 272 (SDSYPPAFLC…IIQRVLSVPC (75 aa)) are cytoplasmic. A helical transmembrane segment spans residues 273 to 293 (MAQFVCSAAVQCTVAMHFLYV). Topologically, residues 294 to 301 (ADDHDHTA) are extracellular. The helical transmembrane segment at 302–322 (MIISIVFFSAVTLEVFVICYF) threads the bilayer. At 323–363 (GDRMRTQSEALCDAFYDCNWIEQLPKFKRELLFTLARTQRP) the chain is on the cytoplasmic side. The chain crosses the membrane as a helical span at residues 364 to 383 (SLIYAGNYIALSLETFEQVM). Residues 384–397 (RFTYSVFTLLLRAK) are Extracellular-facing.

The protein belongs to the insect chemoreceptor superfamily. Heteromeric odorant receptor channel (TC 1.A.69) family. Or2a subfamily. Interacts with Orco. Complexes exist early in the endomembrane system in olfactory sensory neurons (OSNs), coupling these complexes to the conserved ciliary trafficking pathway. As to expression, expressed in 20 sensory neurons on the distal edge of the antenna.

It is found in the cell membrane. In terms of biological role, odorant receptor which mediates acceptance or avoidance behavior, depending on its substrates. The odorant receptor repertoire encodes a large collection of odor stimuli that vary widely in identity, intensity, and duration. May form a complex with Orco to form odorant-sensing units, providing sensitive and prolonged odorant signaling and calcium permeability. The polypeptide is Odorant receptor 2a (Or2a) (Drosophila melanogaster (Fruit fly)).